A 208-amino-acid chain; its full sequence is Octanoyltransferase (208 aa).

In terms of domain architecture, BPL/LPL catalytic spans 29–208 (KTQDELVWLL…KEFNKVFCNC (180 aa)). Substrate contacts are provided by residues 68 to 75 (RGGKYTYH), 140 to 142 (AFG), and 153 to 155 (GVS). The active-site Acyl-thioester intermediate is cysteine 171.

The protein belongs to the LipB family.

Its subcellular location is the cytoplasm. The catalysed reaction is octanoyl-[ACP] + L-lysyl-[protein] = N(6)-octanoyl-L-lysyl-[protein] + holo-[ACP] + H(+). It participates in protein modification; protein lipoylation via endogenous pathway; protein N(6)-(lipoyl)lysine from octanoyl-[acyl-carrier-protein]: step 1/2. Its function is as follows. Catalyzes the transfer of endogenously produced octanoic acid from octanoyl-acyl-carrier-protein onto the lipoyl domains of lipoate-dependent enzymes. Lipoyl-ACP can also act as a substrate although octanoyl-ACP is likely to be the physiological substrate. This chain is Octanoyltransferase, found in Ehrlichia ruminantium (strain Gardel).